We begin with the raw amino-acid sequence, 301 residues long: Rhodopsin (301 aa).

Over 1–18 the chain is Extracellular; the sequence is LHMIHLHWYQYPPMNPIM. A helical transmembrane segment spans residues 19-43; it reads YPLLLVFMLITGILCLAGNFVTIWV. Over 44–55 the chain is Cytoplasmic; the sequence is FMNTKSLRTPAN. The chain crosses the membrane as a helical span at residues 56-78; the sequence is LLVVNLAMSDFLMMFTMFPPMMI. Residues 79–92 lie on the Extracellular side of the membrane; the sequence is TCYYHTWTLGATFC. A disulfide bridge connects residues cysteine 92 and cysteine 169. Residues 93 to 115 form a helical membrane-spanning segment; it reads QVYAFLGNLCGCASIWTMVFITF. The 'Ionic lock' involved in activated form stabilization motif lies at 116–118; it reads DRY. At 116–134 the chain is on the cytoplasmic side; it reads DRYNVIVKGVAGEPLSTKK. A helical membrane pass occupies residues 135 to 155; that stretch reads ATLWILTIWILSTTWCVAPFF. Over 156 to 182 the chain is Extracellular; the sequence is GWNRYVPEGNLTGCGTDYLSQDILSRS. The N-linked (GlcNAc...) asparagine glycan is linked to asparagine 165. The helical transmembrane segment at 183–204 threads the bilayer; it reads YLYIYSTWVYFLPLAITIYCYV. The Cytoplasmic segment spans residues 205–245; that stretch reads VIIKAVAAHEKGMRDQAKKMGIKSLRNEEAQKTSAECRLAK. A helical transmembrane segment spans residues 246 to 267; that stretch reads IAMTTVALWFIAWTPYLLINWV. Over 268 to 278 the chain is Extracellular; it reads GMFARSYLSPV. The chain crosses the membrane as a helical span at residues 279–300; the sequence is YTIWGYVFAKANAVYNPIVYAI. Residue lysine 288 is modified to N6-(retinylidene)lysine.

This sequence belongs to the G-protein coupled receptor 1 family. Opsin subfamily. Homodimer. Interacts with GNAQ. In terms of processing, contains one covalently linked retinal chromophore.

It localises to the cell projection. It is found in the rhabdomere membrane. Functionally, photoreceptor required for image-forming vision at low light intensity. Can use both retinal and 3-dehydroretinal as visual pigment. Light-induced isomerization of 11-cis to all-trans retinal triggers a conformational change that activates signaling via G-proteins. Signaling via GNAQ probably mediates the activation of phospholipase C. The protein is Rhodopsin (RHO) of Orconectes australis (Southern cave crayfish).